The primary structure comprises 219 residues: Kappa-scoloptoxin(11)-Ss1a (219 aa).

A signal peptide spans 1–16 (MFYSHLLFFTFTFACS). The propeptide occupies 17–25 (SSLNRKTKR).

Post-translationally, contains 8 disulfide bonds. Expressed by the venom gland.

Its subcellular location is the secreted. In terms of biological role, voltage-gated potassium channel inhibitor. The chain is Kappa-scoloptoxin(11)-Ss1a from Scolopendra dehaani (Thai centipede).